The primary structure comprises 955 residues: UvrABC system protein A (955 aa).

Residue Gly-35–Ser-42 coordinates ATP. 2 ABC transporter domains span residues Trp-322–Ile-601 and Gly-621–Lys-951. Gly-654 to Ser-661 contributes to the ATP binding site. The C4-type zinc finger occupies Cys-754–Cys-780.

This sequence belongs to the ABC transporter superfamily. UvrA family. As to quaternary structure, forms a heterotetramer with UvrB during the search for lesions.

It is found in the cytoplasm. Its function is as follows. The UvrABC repair system catalyzes the recognition and processing of DNA lesions. UvrA is an ATPase and a DNA-binding protein. A damage recognition complex composed of 2 UvrA and 2 UvrB subunits scans DNA for abnormalities. When the presence of a lesion has been verified by UvrB, the UvrA molecules dissociate. The polypeptide is UvrABC system protein A (Rickettsia conorii (strain ATCC VR-613 / Malish 7)).